A 67-amino-acid polypeptide reads, in one-letter code: Large ribosomal subunit protein bL32 (67 aa).

Over residues 1-19 (MAVPKRKMSRSNTRARRSQ) the composition is skewed to basic residues. Residues 1–21 (MAVPKRKMSRSNTRARRSQWK) are disordered.

Belongs to the bacterial ribosomal protein bL32 family.

This Arthrobacter sp. (strain FB24) protein is Large ribosomal subunit protein bL32.